Reading from the N-terminus, the 315-residue chain is Ribose-phosphate pyrophosphokinase (315 aa).

Residues 37–39 and 96–97 contribute to the ATP site; these read DGE and RQ. The Mg(2+) site is built by His-131 and Asp-170. Residue Lys-194 is part of the active site. Residues Arg-196, Asp-220, and 224–228 each bind D-ribose 5-phosphate; that span reads DTGGT.

This sequence belongs to the ribose-phosphate pyrophosphokinase family. Class I subfamily. Homohexamer. The cofactor is Mg(2+).

Its subcellular location is the cytoplasm. The catalysed reaction is D-ribose 5-phosphate + ATP = 5-phospho-alpha-D-ribose 1-diphosphate + AMP + H(+). It functions in the pathway metabolic intermediate biosynthesis; 5-phospho-alpha-D-ribose 1-diphosphate biosynthesis; 5-phospho-alpha-D-ribose 1-diphosphate from D-ribose 5-phosphate (route I): step 1/1. Involved in the biosynthesis of the central metabolite phospho-alpha-D-ribosyl-1-pyrophosphate (PRPP) via the transfer of pyrophosphoryl group from ATP to 1-hydroxyl of ribose-5-phosphate (Rib-5-P). This Salmonella typhi protein is Ribose-phosphate pyrophosphokinase.